We begin with the raw amino-acid sequence, 462 residues long: N-myc proto-oncogene protein (462 aa).

The interval leucine 19–glutamate 47 is interaction with AURKA. An interaction with AURKA and FBXW7 region spans residues leucine 61–glycine 90. Residues asparagine 76 to glutamate 85 carry the 9aaTAD motif. Disordered stretches follow at residues glutamate 133 to proline 177, alanine 232 to lysine 290, and alanine 332 to glutamine 390. The segment covering glycine 138 to alanine 174 has biased composition (low complexity). The segment covering threonine 257–aspartate 276 has biased composition (acidic residues). Phosphoserine; by CK2 is present on residues serine 259 and serine 261. A bHLH domain is found at glutamate 379–leucine 431. Residues leucine 431–leucine 452 are leucine-zipper.

As to quaternary structure, efficient DNA binding requires dimerization with another bHLH protein. Binds DNA as a heterodimer with MAX. Interacts with KDM5A, KDM5B and HUWE1. Interacts with MYCNOS. Interacts with AURKA; interaction is phospho-independent and triggers AURKA activation; AURKA competes with FBXW7 for binding to unphosphorylated MYCN but not for binding to unphosphorylated MYCN. Interacts with FBXW7; FBXW7 competes with AURKA for binding to unphosphorylated MYCN but not for binding to phosphorylated MYCN. Post-translationally, phosphorylated by GSK3-beta which may promote its degradation. Phosphorylated by AURKA.

It localises to the nucleus. Positively regulates the transcription of MYCNOS in neuroblastoma cells. The polypeptide is N-myc proto-oncogene protein (Mycn) (Rattus norvegicus (Rat)).